The following is a 364-amino-acid chain: Peptide chain release factor 1 (364 aa).

Glutamine 237 carries the N5-methylglutamine modification.

Belongs to the prokaryotic/mitochondrial release factor family. Methylated by PrmC. Methylation increases the termination efficiency of RF1.

Its subcellular location is the cytoplasm. In terms of biological role, peptide chain release factor 1 directs the termination of translation in response to the peptide chain termination codons UAG and UAA. In Mycoplasma mycoides subsp. mycoides SC (strain CCUG 32753 / NCTC 10114 / PG1), this protein is Peptide chain release factor 1.